The chain runs to 361 residues: Peptide chain release factor 1 (361 aa).

The residue at position 233 (Q233) is an N5-methylglutamine. The segment at S282–F310 is disordered.

This sequence belongs to the prokaryotic/mitochondrial release factor family. Post-translationally, methylated by PrmC. Methylation increases the termination efficiency of RF1.

The protein resides in the cytoplasm. Its function is as follows. Peptide chain release factor 1 directs the termination of translation in response to the peptide chain termination codons UAG and UAA. This Treponema denticola (strain ATCC 35405 / DSM 14222 / CIP 103919 / JCM 8153 / KCTC 15104) protein is Peptide chain release factor 1.